Reading from the N-terminus, the 357-residue chain is MCRLDSERALSLFSYLSGTLAATPFLWCFIFKALYSFTLFTTEITAVFFWSLPVTHLALICMCLCPAAQKQLDRRLEWICASAVFAAVVCAAFSGFTFSRVPFIPGLCVLNCLLLLPYPLATATAVYQAPPIVHRYYELGFCGAFMVYYLLLFKKVFVSGVFWLPFIVFLVGGLLAFRHLEQHVYIRAGMQRRRAIFIMPGKYITYSVFQAWAYCRREVVVFVTLLLATLISTASIGLLTPVLIGLDKYMTLFYVGLLSCVGVSVASRRALFVLLPLAAVLLTLVHILGSGPDMLLVRSCLCCLFLVSMLAAMGVEIQLIRRKLHRALNAPQMVLALCTVGNLCISCLLSVINKVVG.

11 consecutive transmembrane segments (helical) span residues 20-40, 44-64, 78-98, 101-121, 132-152, 157-177, 219-239, 242-262, 270-290, 300-320, and 333-353; these read LAAT…FTLF, ITAV…CMCL, WICA…GFTF, VPFI…YPLA, IVHR…YLLL, FVSG…LLAF, VVVF…IGLL, VLIG…SCVG, ALFV…ILGS, CLCC…IQLI, and MVLA…SVIN.

The protein belongs to the herpesviridae BMRF2 family.

The protein localises to the virion membrane. Its subcellular location is the host cell membrane. In terms of biological role, participates in rearrangement of cellular actin to increase intercellular contacts and thereby promotes virus cell-to-cell spreadin$g. The protein is Protein ORF58 (ORF58) of Homo sapiens (Human).